Consider the following 188-residue polypeptide: Peptidyl-tRNA hydrolase (188 aa).

Tyr-14 serves as a coordination point for tRNA. The active-site Proton acceptor is the His-19. TRNA-binding residues include Tyr-64, Asn-66, and Asn-112.

The protein belongs to the PTH family. In terms of assembly, monomer.

It is found in the cytoplasm. It carries out the reaction an N-acyl-L-alpha-aminoacyl-tRNA + H2O = an N-acyl-L-amino acid + a tRNA + H(+). In terms of biological role, hydrolyzes ribosome-free peptidyl-tRNAs (with 1 or more amino acids incorporated), which drop off the ribosome during protein synthesis, or as a result of ribosome stalling. Its function is as follows. Catalyzes the release of premature peptidyl moieties from peptidyl-tRNA molecules trapped in stalled 50S ribosomal subunits, and thus maintains levels of free tRNAs and 50S ribosomes. The chain is Peptidyl-tRNA hydrolase from Clostridium novyi (strain NT).